Here is a 141-residue protein sequence, read N- to C-terminus: Nucleoside diphosphate kinase (141 aa).

Positions 11, 59, 87, 93, 104, and 114 each coordinate ATP. H117 (pros-phosphohistidine intermediate) is an active-site residue.

It belongs to the NDK family. In terms of assembly, homotetramer. The cofactor is Mg(2+).

Its subcellular location is the cytoplasm. The catalysed reaction is a 2'-deoxyribonucleoside 5'-diphosphate + ATP = a 2'-deoxyribonucleoside 5'-triphosphate + ADP. It carries out the reaction a ribonucleoside 5'-diphosphate + ATP = a ribonucleoside 5'-triphosphate + ADP. In terms of biological role, major role in the synthesis of nucleoside triphosphates other than ATP. The ATP gamma phosphate is transferred to the NDP beta phosphate via a ping-pong mechanism, using a phosphorylated active-site intermediate. This is Nucleoside diphosphate kinase from Stenotrophomonas maltophilia (strain R551-3).